The chain runs to 191 residues: Large ribosomal subunit protein eL15 (191 aa).

The protein belongs to the eukaryotic ribosomal protein eL15 family.

The chain is Large ribosomal subunit protein eL15 (rpl15e) from Pyrobaculum aerophilum (strain ATCC 51768 / DSM 7523 / JCM 9630 / CIP 104966 / NBRC 100827 / IM2).